We begin with the raw amino-acid sequence, 669 residues long: Dymeclin (669 aa).

G2 carries N-myristoyl glycine lipidation.

Belongs to the dymeclin family. In terms of assembly, interacts with GOLM1 and PPIB. In terms of processing, myristoylated in vitro; myristoylation is not essential for protein targeting to Golgi compartment.

The protein resides in the cytoplasm. Its subcellular location is the golgi apparatus. It is found in the membrane. In terms of biological role, necessary for correct organization of Golgi apparatus. Involved in bone development. This is Dymeclin (Dym) from Mus musculus (Mouse).